The sequence spans 268 residues: Riboflavin transport system permease protein RibX (268 aa).

The next 6 helical transmembrane spans lie at 24 to 44 (ALGL…GVTL), 76 to 96 (LATL…ALIL), 119 to 139 (AIPV…GLTS), 140 to 160 (KVLV…VVAI), 185 to 205 (VEAP…LALA), and 236 to 256 (LIFV…VLAG). An ABC transmembrane type-1 domain is found at 75-255 (TLATLSAALG…LITLTLYVLA (181 aa)).

It belongs to the binding-protein-dependent transport system permease family. The complex is likely composed of an ATP-binding protein, a transmembrane protein (RibX) and a solute-binding protein (RibY).

It is found in the cell membrane. Functionally, part of an ABC transporter complex that transports riboflavin into the cell. This chain is Riboflavin transport system permease protein RibX, found in Chloroflexus aurantiacus (strain ATCC 29366 / DSM 635 / J-10-fl).